A 92-amino-acid polypeptide reads, in one-letter code: Small ribosomal subunit protein uS19 (92 aa).

It belongs to the universal ribosomal protein uS19 family.

Functionally, protein S19 forms a complex with S13 that binds strongly to the 16S ribosomal RNA. The polypeptide is Small ribosomal subunit protein uS19 (Photorhabdus laumondii subsp. laumondii (strain DSM 15139 / CIP 105565 / TT01) (Photorhabdus luminescens subsp. laumondii)).